Consider the following 204-residue polypeptide: Holliday junction branch migration complex subunit RuvA (204 aa).

The interval 1 to 64 is domain I; sequence MIGKLKGTID…EDQLKLFGFM (64 aa). Positions 65–143 are domain II; it reads TALEREWFNL…AFAGEAINIA (79 aa). Positions 144-151 are flexible linker; the sequence is LKQELGEG. The tract at residues 152–204 is domain III; that stretch reads VAAAPVADAVSALTNLGYSRDQAANAVAAAMKTAGDDADSAKLIRLGLKELAR.

The protein belongs to the RuvA family. Homotetramer. Forms an RuvA(8)-RuvB(12)-Holliday junction (HJ) complex. HJ DNA is sandwiched between 2 RuvA tetramers; dsDNA enters through RuvA and exits via RuvB. An RuvB hexamer assembles on each DNA strand where it exits the tetramer. Each RuvB hexamer is contacted by two RuvA subunits (via domain III) on 2 adjacent RuvB subunits; this complex drives branch migration. In the full resolvosome a probable DNA-RuvA(4)-RuvB(12)-RuvC(2) complex forms which resolves the HJ.

The protein localises to the cytoplasm. The RuvA-RuvB-RuvC complex processes Holliday junction (HJ) DNA during genetic recombination and DNA repair, while the RuvA-RuvB complex plays an important role in the rescue of blocked DNA replication forks via replication fork reversal (RFR). RuvA specifically binds to HJ cruciform DNA, conferring on it an open structure. The RuvB hexamer acts as an ATP-dependent pump, pulling dsDNA into and through the RuvAB complex. HJ branch migration allows RuvC to scan DNA until it finds its consensus sequence, where it cleaves and resolves the cruciform DNA. In Rhizobium leguminosarum bv. trifolii (strain WSM2304), this protein is Holliday junction branch migration complex subunit RuvA.